The chain runs to 287 residues: Nucleotide-binding protein GM21_3387 (287 aa).

8–15 provides a ligand contact to ATP; that stretch reads GLSGSGKS. Position 59-62 (59-62) interacts with GTP; it reads DIRS.

Belongs to the RapZ-like family.

In terms of biological role, displays ATPase and GTPase activities. This is Nucleotide-binding protein GM21_3387 from Geobacter sp. (strain M21).